An 85-amino-acid chain; its full sequence is uncharacterized protein (85 aa).

The tract at residues glutamate 44–asparagine 85 is disordered. Residues histidine 50–glutamine 60 are compositionally biased toward polar residues. Over residues glutamate 68–asparagine 85 the composition is skewed to acidic residues.

This is an uncharacterized protein from Haloarcula hispanica (His1V).